The primary structure comprises 154 residues: NADPH-dependent 7-cyano-7-deazaguanine reductase (154 aa).

Residues 1-13 (MSKTDVSGLSQLG) are compositionally biased toward polar residues. A disordered region spans residues 1–24 (MSKTDVSGLSQLGRQVDAPTSPET). The Thioimide intermediate role is filled by cysteine 52. The active-site Proton donor is the aspartate 59. Residues 74–76 (VES) and 93–94 (HE) contribute to the substrate site.

This sequence belongs to the GTP cyclohydrolase I family. QueF type 1 subfamily.

The protein resides in the cytoplasm. It carries out the reaction 7-aminomethyl-7-carbaguanine + 2 NADP(+) = 7-cyano-7-deazaguanine + 2 NADPH + 3 H(+). Its pathway is tRNA modification; tRNA-queuosine biosynthesis. Its function is as follows. Catalyzes the NADPH-dependent reduction of 7-cyano-7-deazaguanine (preQ0) to 7-aminomethyl-7-deazaguanine (preQ1). This chain is NADPH-dependent 7-cyano-7-deazaguanine reductase, found in Allorhizobium ampelinum (strain ATCC BAA-846 / DSM 112012 / S4) (Agrobacterium vitis (strain S4)).